A 338-amino-acid chain; its full sequence is Holliday junction branch migration complex subunit RuvB (338 aa).

Positions 1–181 (MEERILTQNF…FGVINRLDYY (181 aa)) are large ATPase domain (RuvB-L). ATP is bound by residues leucine 20, arginine 21, glycine 62, lysine 65, threonine 66, threonine 67, 128-130 (EDF), arginine 171, tyrosine 181, and arginine 218. Threonine 66 provides a ligand contact to Mg(2+). The small ATPAse domain (RuvB-S) stretch occupies residues 182 to 252 (SVEELKEIIK…TSKEALDVLG (71 aa)). Residues 255–338 (EIGLEYIDRK…YIEQGRIEGV (84 aa)) form a head domain (RuvB-H) region. 2 residues coordinate DNA: arginine 310 and arginine 315.

The protein belongs to the RuvB family. As to quaternary structure, homohexamer. Forms an RuvA(8)-RuvB(12)-Holliday junction (HJ) complex. HJ DNA is sandwiched between 2 RuvA tetramers; dsDNA enters through RuvA and exits via RuvB. An RuvB hexamer assembles on each DNA strand where it exits the tetramer. Each RuvB hexamer is contacted by two RuvA subunits (via domain III) on 2 adjacent RuvB subunits; this complex drives branch migration. In the full resolvosome a probable DNA-RuvA(4)-RuvB(12)-RuvC(2) complex forms which resolves the HJ.

Its subcellular location is the cytoplasm. It catalyses the reaction ATP + H2O = ADP + phosphate + H(+). Its function is as follows. The RuvA-RuvB-RuvC complex processes Holliday junction (HJ) DNA during genetic recombination and DNA repair, while the RuvA-RuvB complex plays an important role in the rescue of blocked DNA replication forks via replication fork reversal (RFR). RuvA specifically binds to HJ cruciform DNA, conferring on it an open structure. The RuvB hexamer acts as an ATP-dependent pump, pulling dsDNA into and through the RuvAB complex. RuvB forms 2 homohexamers on either side of HJ DNA bound by 1 or 2 RuvA tetramers; 4 subunits per hexamer contact DNA at a time. Coordinated motions by a converter formed by DNA-disengaged RuvB subunits stimulates ATP hydrolysis and nucleotide exchange. Immobilization of the converter enables RuvB to convert the ATP-contained energy into a lever motion, pulling 2 nucleotides of DNA out of the RuvA tetramer per ATP hydrolyzed, thus driving DNA branch migration. The RuvB motors rotate together with the DNA substrate, which together with the progressing nucleotide cycle form the mechanistic basis for DNA recombination by continuous HJ branch migration. Branch migration allows RuvC to scan DNA until it finds its consensus sequence, where it cleaves and resolves cruciform DNA. This chain is Holliday junction branch migration complex subunit RuvB, found in Thermoanaerobacter pseudethanolicus (strain ATCC 33223 / 39E) (Clostridium thermohydrosulfuricum).